Here is an 814-residue protein sequence, read N- to C-terminus: Telomere repeats-binding bouquet formation protein 1 (814 aa).

ARM repeat units lie at residues 93–136 (EMFR…KTSR) and 327–368 (GGLP…GMST). 3 disordered regions span residues 461-521 (DQDS…ELKR), 551-584 (STPTEGNRDTQGPDIFRHPDPVKRNQREPSLSDD), and 653-753 (FRRS…KRQN). Residues 488-512 (EKSKKRKHKQKRENERSDNQETRRE) adopt a coiled-coil conformation. Basic and acidic residues-rich tracts occupy residues 499-521 (RENERSDNQETRREGVNKRELKR), 565-577 (IFRHPDPVKRNQR), and 679-688 (EHSTSAQEHK). Positions 689 to 699 (QKSKREKHKLS) are enriched in basic residues. Basic and acidic residues predominate over residues 714-741 (RPRETYSPDVKQWTDHRHLKKSSEDARS). The 54-residue stretch at 746 to 799 (GRHRKRQNWSDKELCYLTKGVKRFGHSWNTILWKYPFHPGRTNVDLAKKFYHMQ) folds into the Myb-like domain.

Belongs to the TERB1 family. Component of the MAJIN-TERB1-TERB2 complex.

It localises to the chromosome. The protein resides in the telomere. It is found in the nucleus inner membrane. Functionally, meiosis-specific telomere-associated protein involved in meiotic telomere attachment to the nucleus inner membrane, a crucial step for homologous pairing and synapsis. Component of the MAJIN-TERB1-TERB2 complex, which promotes telomere cap exchange by mediating attachment of telomeric DNA to the inner nuclear membrane and replacement of the protective cap of telomeric chromosomes: in early meiosis, the MAJIN-TERB1-TERB2 complex associates with telomeric DNA and the shelterin/telosome complex. During prophase, the complex matures and promotes release of the shelterin/telosome complex from telomeric DNA. In the MAJIN-TERB1-TERB2 complex, TERB1 probably mediates association with the shelterin/telosome complex. In Danio rerio (Zebrafish), this protein is Telomere repeats-binding bouquet formation protein 1 (ccdc79).